The sequence spans 526 residues: Chaperonin GroEL 2 (526 aa).

Residues K50, G413, and D494 each coordinate ATP.

The protein belongs to the chaperonin (HSP60) family. Forms a cylinder of 14 subunits composed of two heptameric rings stacked back-to-back. Interacts with the co-chaperonin GroES.

It localises to the cytoplasm. It carries out the reaction ATP + H2O + a folded polypeptide = ADP + phosphate + an unfolded polypeptide.. Together with its co-chaperonin GroES, plays an essential role in assisting protein folding. The GroEL-GroES system forms a nano-cage that allows encapsulation of the non-native substrate proteins and provides a physical environment optimized to promote and accelerate protein folding. The polypeptide is Chaperonin GroEL 2 (Chlamydia pneumoniae (Chlamydophila pneumoniae)).